A 20-amino-acid chain; its full sequence is RVSNLTIHPLRNIIDLRYVG.

Asparagine 4 carries an N-linked (GlcNAc...) asparagine glycan.

The protein belongs to the peptidase A1 family. Highly expressed in the placenta between day 60 and day 100 of gestation.

It is found in the secreted. It localises to the extracellular space. The sequence is that of Pregnancy-associated glycoprotein 55h from Ovis aries (Sheep).